Consider the following 156-residue polypeptide: Cyanate hydratase (156 aa).

Active-site residues include Arg96, Glu99, and Ser122.

This sequence belongs to the cyanase family. As to quaternary structure, homodecamer composed of five homodimers.

It catalyses the reaction cyanate + hydrogencarbonate + 3 H(+) = NH4(+) + 2 CO2. Catalyzes the reaction of cyanate with bicarbonate to produce ammonia and carbon dioxide. This is Cyanate hydratase (cynS) from Escherichia coli O157:H7.